A 137-amino-acid polypeptide reads, in one-letter code: Acidic phospholipase A2 Vur-PL3 (137 aa).

The signal sequence occupies residues 1-16 (MRTLWIVAVCLIGVEG). 7 cysteine pairs are disulfide-bonded: Cys-42-Cys-131, Cys-44-Cys-60, Cys-59-Cys-111, Cys-65-Cys-137, Cys-66-Cys-104, Cys-73-Cys-97, and Cys-91-Cys-102. Ca(2+) contacts are provided by Tyr-43, Gly-45, and Gly-47. The active site involves His-63. A Ca(2+)-binding site is contributed by Asp-64. Asp-105 is a catalytic residue.

The cofactor is Ca(2+). In terms of tissue distribution, expressed by the venom gland.

It is found in the secreted. The enzyme catalyses a 1,2-diacyl-sn-glycero-3-phosphocholine + H2O = a 1-acyl-sn-glycero-3-phosphocholine + a fatty acid + H(+). This chain is Acidic phospholipase A2 Vur-PL3, found in Vipera renardi (Steppe viper).